Reading from the N-terminus, the 832-residue chain is Protein wech (832 aa).

Polar residues predominate over residues 1-14 (MMELLSNNSVPQQM). The interval 1–42 (MMELLSNNSVPQQMASSNAPSANNVAHSSTANGSGGGSVSSN) is disordered. The segment covering 15-32 (ASSNAPSANNVAHSSTAN) has biased composition (low complexity). Ser-107 bears the Phosphoserine mark. 2 B box-type zinc fingers span residues 118 to 163 (NSSI…IVSL) and 184 to 224 (SGNF…YASI). The Zn(2+) site is built by Cys-123, Cys-126, Cys-145, His-149, Cys-189, His-192, Cys-211, and His-216. Residues Ser-470, Ser-475, and Ser-506 each carry the phosphoserine modification. 5 NHL repeats span residues 537 to 580 (SLSF…FNPD), 584 to 627 (KFKF…FTAS), 631 to 674 (LLKF…FDSE), 680 to 722 (QIVF…IDPD), and 727 to 770 (LSVK…FNQN).

In terms of assembly, interacts with the head domain of rhea and the kinase domain of Ilk. Interacts with AGO1. Interacts with mei-P26. In terms of tissue distribution, expressed in ovarian germline stem cells (at protein level). Expressed ubiquitously in all epithelial cells during early stages of embryogenesis. Specifically expressed at epidermal muscle attachment site.

Its function is as follows. Vital for larval development. Plays a role in tumor formation. A crucial component for the physical link between integrins and the cytoskeleton in the epidermal muscle attachment sites. In Drosophila melanogaster (Fruit fly), this protein is Protein wech (wech).